The following is a 496-amino-acid chain: Chromosomal replication initiator protein DnaA (496 aa).

Residues 1–76 form a domain I, interacts with DnaA modulators region; sequence MKMDSAVSEE…TELWQEENPQ (76 aa). Residues 76-150 form a domain II region; that stretch reads QILKVEVVVR…AAATDAVLGS (75 aa). Positions 151 to 373 are domain III, AAA+ region; that stretch reads PLDPRYTFDT…GAFNQLLFRQ (223 aa). ATP contacts are provided by glycine 197, glycine 199, lysine 200, and threonine 201. Positions 374-496 are domain IV, binds dsDNA; that stretch reads SFEPNISIDR…LKRLINDQAA (123 aa).

Belongs to the DnaA family. As to quaternary structure, oligomerizes as a right-handed, spiral filament on DNA at oriC.

Its subcellular location is the cytoplasm. Functionally, plays an essential role in the initiation and regulation of chromosomal replication. ATP-DnaA binds to the origin of replication (oriC) to initiate formation of the DNA replication initiation complex once per cell cycle. Binds the DnaA box (a 9 base pair repeat at the origin) and separates the double-stranded (ds)DNA. Forms a right-handed helical filament on oriC DNA; dsDNA binds to the exterior of the filament while single-stranded (ss)DNA is stabiized in the filament's interior. The ATP-DnaA-oriC complex binds and stabilizes one strand of the AT-rich DNA unwinding element (DUE), permitting loading of DNA polymerase. After initiation quickly degrades to an ADP-DnaA complex that is not apt for DNA replication. Binds acidic phospholipids. The chain is Chromosomal replication initiator protein DnaA from Brucella suis biovar 1 (strain 1330).